The sequence spans 156 residues: Ribonuclease pancreatic (156 aa).

A signal peptide spans 1–28 (MALEKSLALLPLLVLVLLVLGWVQPSLG). The segment covering 33-43 (AQKFQRQHMDS) has biased composition (basic and acidic residues). The segment at 33-52 (AQKFQRQHMDSDGSPSSNPT) is disordered. Positions 35 and 38 each coordinate substrate. Residue histidine 40 is the Proton acceptor of the active site. 4 cysteine pairs are disulfide-bonded: cysteine 54–cysteine 112, cysteine 68–cysteine 123, cysteine 86–cysteine 138, and cysteine 93–cysteine 100. N-linked (GlcNAc...) asparagine glycosylation is present at asparagine 62. Substrate contacts are provided by residues 69–73 (KPVNT), lysine 94, and arginine 113. Asparagine 116 is a glycosylation site (N-linked (GlcNAc...) asparagine). Histidine 147 (proton donor) is an active-site residue.

The protein belongs to the pancreatic ribonuclease family. Monomer. Interacts with and forms tight 1:1 complexes with RNH1. Dimerization of two such complexes may occur. Interaction with RNH1 inhibits this protein.

The protein localises to the secreted. It carries out the reaction an [RNA] containing cytidine + H2O = an [RNA]-3'-cytidine-3'-phosphate + a 5'-hydroxy-ribonucleotide-3'-[RNA].. The enzyme catalyses an [RNA] containing uridine + H2O = an [RNA]-3'-uridine-3'-phosphate + a 5'-hydroxy-ribonucleotide-3'-[RNA].. In terms of biological role, endonuclease that catalyzes the cleavage of RNA on the 3' side of pyrimidine nucleotides. Acts on single-stranded and double-stranded RNA. The chain is Ribonuclease pancreatic (RNASE1) from Saguinus oedipus (Cotton-top tamarin).